A 416-amino-acid chain; its full sequence is MKIMILGSGAREYSIALALRRVDKNLEFYFAPGNGATESLGTNLNLKDPVVLATYAKEKGFDLCIVGSESFLAEGVVDIFKQQGLAIFGPSKAAAMLETSKSFMKSFLKKYRIKTAKFLNTNDIEKAKNFIYSLTPPIVVKADGLCAGKGVIIAKTHEEAIEETAKMLSGESFGDAGKLVVIEEFLDGYELSIFAVCDGNDFVLLPAAQDHKKLLDNDQGPNTGGMGAYAPSSLANESLLRKVQKDIILPTLAGMKKEGAEFCGVLFIGAMIVGNKPYVLEFNVRFGDPECEVLMPLIEDPLELILAATQRRLRHSKIKIKKEFAVGVVCASENYPYKSSPKSEITVNNIPENSHISYAGVSLEDGKLMADGGRVLVCVGTGKSIEEAQKNAYKLCDNVNFKGKQYRKDIAHQVLK.

In terms of domain architecture, ATP-grasp spans 105-310 (KSFLKKYRIK…PLELILAATQ (206 aa)). 131-192 (IYSLTPPIVV…EEFLDGYELS (62 aa)) lines the ATP pocket. Glutamate 281 and asparagine 283 together coordinate Mg(2+).

It belongs to the GARS family. It depends on Mg(2+) as a cofactor. Mn(2+) is required as a cofactor.

The enzyme catalyses 5-phospho-beta-D-ribosylamine + glycine + ATP = N(1)-(5-phospho-beta-D-ribosyl)glycinamide + ADP + phosphate + H(+). It participates in purine metabolism; IMP biosynthesis via de novo pathway; N(1)-(5-phospho-D-ribosyl)glycinamide from 5-phospho-alpha-D-ribose 1-diphosphate: step 2/2. This is Phosphoribosylamine--glycine ligase from Campylobacter jejuni subsp. jejuni serotype O:2 (strain ATCC 700819 / NCTC 11168).